The primary structure comprises 505 residues: Probable cytochrome P450 28c1 (505 aa).

A heme-binding site is contributed by cysteine 444.

Belongs to the cytochrome P450 family. Heme serves as cofactor.

The protein localises to the endoplasmic reticulum membrane. It is found in the microsome membrane. Its function is as follows. May be involved in the metabolism of insect hormones and in the breakdown of synthetic insecticides. The chain is Probable cytochrome P450 28c1 (Cyp28c1) from Drosophila melanogaster (Fruit fly).